A 335-amino-acid polypeptide reads, in one-letter code: Beta-ketoacyl-[acyl-carrier-protein] synthase III (335 aa).

Residues C116 and H256 contribute to the active site. Residues 257–261 (QANLR) are ACP-binding. N286 is a catalytic residue.

The protein belongs to the thiolase-like superfamily. FabH family. As to quaternary structure, homodimer.

It localises to the cytoplasm. It catalyses the reaction malonyl-[ACP] + acetyl-CoA + H(+) = 3-oxobutanoyl-[ACP] + CO2 + CoA. It functions in the pathway lipid metabolism; fatty acid biosynthesis. Its function is as follows. Catalyzes the condensation reaction of fatty acid synthesis by the addition to an acyl acceptor of two carbons from malonyl-ACP. Catalyzes the first condensation reaction which initiates fatty acid synthesis and may therefore play a role in governing the total rate of fatty acid production. Possesses both acetoacetyl-ACP synthase and acetyl transacylase activities. Its substrate specificity determines the biosynthesis of branched-chain and/or straight-chain of fatty acids. This Porphyromonas gingivalis (strain ATCC 33277 / DSM 20709 / CIP 103683 / JCM 12257 / NCTC 11834 / 2561) protein is Beta-ketoacyl-[acyl-carrier-protein] synthase III.